A 280-amino-acid polypeptide reads, in one-letter code: Beta-glucosyl-HMC-alpha-glucosyl-transferase (280 aa).

The protein operates within genetic information processing; DNA modification. Its function is as follows. Transfers a gentiobiosyl-group on a hydroxymethylcytosine residue in DNA. Is involved in a DNA modification process to protects the phage genome against its own nucleases and the host restriction endonuclease system. This chain is Beta-glucosyl-HMC-alpha-glucosyl-transferase, found in Enterobacteria phage T6 (Bacteriophage T6).